Consider the following 720-residue polypeptide: Receptor-like protein CLAVATA2 (720 aa).

Residues 1-25 form the signal peptide; it reads MIKIADFTLFFFIFVFSPSLPLAQS. An N-cap region spans residues 26–92; the sequence is QLPDLDPQDK…LNLSSQIHPS (67 aa). Residues 26–686 lie on the Extracellular side of the membrane; sequence QLPDLDPQDK…QNELVEGPIS (661 aa). Residues Asn49, Asn62, Asn84, Asn108, Asn127, and Asn168 are each glycosylated (N-linked (GlcNAc...) asparagine). Cysteines 60 and 68 form a disulfide. LRR repeat units lie at residues 96–122, 124–144, 146–168, 170–194, 195–217, 219–238, 239–263, 264–287, 288–311, 314–338, 339–362, 364–386, 388–410, 411–436, 438–458, 459–482, 484–506, 547–571, 573–594, 595–617, and 619–641; these read LSSL…SLRN, RTLN…FVSL, ELRE…WFGN, SMNL…LLYL, KSLK…FQQP, VVLN…FYAS, RPSL…LGSL, KELS…LMFS, EKLV…ISET, KLGL…ITEL, KSLQ…IGNL, YLQV…IVGC, QLLA…LDAL, DSLK…GLKS, EIVD…ITKW, SNLK…LFKF, KIQM…NLNS, LLSM…LFRQ, NIEY…LEKL, PRLK…NISA, and PGLT…KEGL. Asn206 carries an N-linked (GlcNAc...) asparagine glycan. A glycan (N-linked (GlcNAc...) asparagine) is linked at Asn270. A glycan (N-linked (GlcNAc...) asparagine) is linked at Asn361. An N-linked (GlcNAc...) asparagine glycan is attached at Asn398. Asn446 carries N-linked (GlcNAc...) asparagine glycosylation. The N-linked (GlcNAc...) asparagine glycan is linked to Asn505. N-linked (GlcNAc...) asparagine glycans are attached at residues Asn578, Asn614, and Asn625. The tract at residues 649–682 is C-cap/acidic domain; it reads AGNPELCVETPGSKCDPANIDASQEEIYQNELVE. A helical membrane pass occupies residues 687-707; the sequence is IWIFCLSAFISFDFGVLGIFC. Residues 708–720 are Cytoplasmic-facing; the sequence is SARARSYILQTKA.

This sequence belongs to the RLP family. In terms of assembly, parts of a tetrameric complex made of two CLV2/CRN heterodimers that can interact with CLV3 and CLE peptides. CLV2/CRN heterodimer interacts with CLV1 homodimers. Interacts with CRN; this dimer can interact with BAM3. Interacts with CLE14. In terms of tissue distribution, mostly expressed in apices (e.g. shoot apical meristem and flower buds), and, to a lower extent, in flowers, leaves, seedlings and siliques. Also expressed in the inner tissues of the proximal root meristem. Expressed throughout the vascular cylinder of root tips.

It localises to the cell membrane. The protein resides in the endoplasmic reticulum membrane. Its function is as follows. Involved in the perception of CLV3 and CLV3-like (CLE) peptides, that act as extracellular signals regulating meristems maintenance. Required for the sensing of the root CLE peptides (e.g. CLE8, CLE9/CLE10, CLE11, CLE13, CLE14, CLE16, CLE17, CLE18, CLE20, CLE21, CLE25, CLE26, CLE40, CLE41/CLE44 and CLE45), which also involves CRN and leads to root growth regulation, mostly in the phloem and protophloem. Involved in controlling the stem cell population size in shoot and root apical meristems, and during organ development. Promotes the formation of CLV1 multimers. In complex with CRN, perceives secreted CLV3-like effector proteins from plant-parasitic cyst nematodes as ligand mimics of the plant CLE signaling pathway. This recognition is required for proper feeding structure (syncytium) development and ultimately successful nematode infection. CLE14 perception by CLV2/CRN complex triggers root meristem differentiation. The polypeptide is Receptor-like protein CLAVATA2 (Arabidopsis thaliana (Mouse-ear cress)).